The chain runs to 641 residues: Frizzled-1 (641 aa).

A signal peptide spans 1 to 68; it reads MAEEAVPSES…WLLEAPLLLG (68 aa). Residues 69-316 lie on the Extracellular side of the membrane; sequence VRAQPAGQVS…PEELRFSRTW (248 aa). Positions 74-99 are disordered; that stretch reads AGQVSGPGQQRPPPPQPQQGGQQYNG. In terms of domain architecture, FZ spans 106-224; that stretch reads PDHGYCQPIS…HGAGELCVGQ (119 aa). 5 disulfide bridges follow: cysteine 111/cysteine 172, cysteine 119/cysteine 165, cysteine 156/cysteine 192, cysteine 182/cysteine 221, and cysteine 186/cysteine 209. Asparagine 125 is a glycosylation site (N-linked (GlcNAc...) asparagine). An N-linked (GlcNAc...) asparagine glycan is attached at asparagine 225. The chain crosses the membrane as a helical span at residues 317–337; it reads IGIWSVLCCASTLFTVLTYLV. The Cytoplasmic portion of the chain corresponds to 338–348; the sequence is DMRRFSYPERP. Residues 349-369 form a helical membrane-spanning segment; it reads IIFLSGCYTAVAVAYIAGFLL. Topologically, residues 370-396 are extracellular; the sequence is EDRVVCNDKFAEDGARTVAQGTKKEGC. Residues 397 to 417 traverse the membrane as a helical segment; sequence TILFMMLYFFSMASSIWWVIL. The Cytoplasmic portion of the chain corresponds to 418 to 439; that stretch reads SLTWFLAAGMKWGHEAIEANSQ. A helical transmembrane segment spans residues 440–460; sequence YFHLAAWAVPAIKTITILALG. Over 461 to 483 the chain is Extracellular; sequence QVDGDVLSGVCFVGLNNVDALRG. Residues 484-504 form a helical membrane-spanning segment; it reads FVLAPLFVYLFIGTSFLLAGF. Over 505–530 the chain is Cytoplasmic; sequence VSLFRIRTIMKHDGTKTEKLEKLMVR. A helical transmembrane segment spans residues 531-551; the sequence is IGVFSVLYTVPATIVIACYFY. The Extracellular portion of the chain corresponds to 552–595; the sequence is EQAFRDQWERSWVAQSCKSYAIPCPHLQGGGGVPPHPPMSPDFT. Residues 596-616 traverse the membrane as a helical segment; the sequence is VFMIKYLMTLIVGITSGFWIW. Residues 617–641 are Cytoplasmic-facing; that stretch reads SGKTLNSWRKFYTRLTNSKQGETTV. Residues 619–624 carry the Lys-Thr-X-X-X-Trp motif, mediates interaction with the PDZ domain of Dvl family members motif; sequence KTLNSW. The PDZ-binding signature appears at 639-641; the sequence is TTV.

It belongs to the G-protein coupled receptor Fz/Smo family. Interacts with MYOC. Interacts with WNT7B. Post-translationally, ubiquitinated by ZNRF3, leading to its degradation by the proteasome. As to expression, widely expressed. Most abundant in kidney, liver, uterus, ovary and heart. Lower levels seen in brain and intestine. Extremely low in calvaria, mammary glands and testis.

It is found in the cell membrane. Receptor for Wnt proteins. Activated by WNT3A, WNT3, WNT1 and to a lesser extent WNT2, but apparently not by WNT4, WNT5A, WNT5B, WNT6 or WNT7A. Contradictory results have been reported for activation by WNT7B. Functions in the canonical Wnt/beta-catenin signaling pathway. The canonical Wnt/beta-catenin signaling pathway leads to the activation of disheveled proteins, inhibition of GSK-3 kinase, nuclear accumulation of beta-catenin and activation of Wnt target genes. A second signaling pathway involving PKC and calcium fluxes has been seen for some family members, but it is not yet clear if it represents a distinct pathway or if it can be integrated in the canonical pathway, as PKC seems to be required for Wnt-mediated inactivation of GSK-3 kinase. Both pathways seem to involve interactions with G-proteins. May be involved in transduction and intercellular transmission of polarity information during tissue morphogenesis and/or in differentiated tissues. This chain is Frizzled-1 (Fzd1), found in Rattus norvegicus (Rat).